Consider the following 225-residue polypeptide: Small ribosomal subunit protein uS3 (225 aa).

The 69-residue stretch at 38–106 (LRKFLQGKLQ…EVSLNIVEIR (69 aa)) folds into the KH type-2 domain.

It belongs to the universal ribosomal protein uS3 family. In terms of assembly, part of the 30S ribosomal subunit. Forms a tight complex with proteins S10 and S14.

Functionally, binds the lower part of the 30S subunit head. Binds mRNA in the 70S ribosome, positioning it for translation. The protein is Small ribosomal subunit protein uS3 of Rhodospirillum centenum (strain ATCC 51521 / SW).